The following is a 244-amino-acid chain: Type III pantothenate kinase (244 aa).

ATP is bound at residue 7 to 14 (DIGNTRLK). Substrate contacts are provided by residues tyrosine 95 and 102–105 (GIDR). Aspartate 104 acts as the Proton acceptor in catalysis. ATP is bound at residue threonine 126. Position 177 (threonine 177) interacts with substrate.

It belongs to the type III pantothenate kinase family. As to quaternary structure, homodimer. NH4(+) serves as cofactor. It depends on K(+) as a cofactor.

The protein localises to the cytoplasm. The enzyme catalyses (R)-pantothenate + ATP = (R)-4'-phosphopantothenate + ADP + H(+). Its pathway is cofactor biosynthesis; coenzyme A biosynthesis; CoA from (R)-pantothenate: step 1/5. Catalyzes the phosphorylation of pantothenate (Pan), the first step in CoA biosynthesis. In Acinetobacter baumannii (strain ACICU), this protein is Type III pantothenate kinase.